Reading from the N-terminus, the 537-residue chain is uncharacterized protein (537 aa).

Positions 1–15 (MALFQLFSFLNVTLG) are cleaved as a signal peptide. The next 2 helical transmembrane spans lie at 459-479 (VLFS…GCCF) and 490-510 (VILL…LGFT).

The protein resides in the host membrane. This is an uncharacterized protein from Citrus sinensis (Sweet orange).